We begin with the raw amino-acid sequence, 675 residues long: MSEIPEKVRKRVASLRDELDYHNHRYYVLDDPEIPDAAYDALMRELQDLEAKYPELVTPDSPTQRVGGAPLKAFEEARHLLPMLSLDNAFEEADVLAFEKRIRDRLGEESEIEFAVEPKLDGLAISLLYEDGHLVRGATRGDGATGEDVTANVRTIRAIPLRLQGRGWPKLLEVRGEVYMDRAGFEAFNREAASRGEKVFVNPRNAAAGSLRQLDSRITAKRPLTFFAYGAGHVEGGELPDTHAAVLDALAEWGQRVCPERDVVTGAAGCLEYYRRIGERRDGLPYDIDGVVYKVNRFELQQRLGFVSRAPRWAIAHKYPAQEQMTLLRDVEFQVGRTGALTPVARLEPVFVGGVTVSNATLHNMDEVERKDVRIGDTVIVRRAGDVIPEVAAVVLSRRPHNARHVVMPTHCPVCGSEIVRSEGEAVARCSGGLYCAAQRREAIKHFASRRAMDIEGLGDKLVEQLVDAGLVDHVDGLYRLTAEQLAGLERMGEKSAHNLVDALEKSKHTQLARFIFALGIREVGEATARALAIHFGGLDALMAADEEALMQVPDVGPVVAHHVATFFQQPHNREVIDALREAGVHWEESEPAALQAEDLPLSGNTYVLTGALESMTREEAGDRLMALGAKVSGSVSKKTTAVIAGEAAGSKLAKAEKLGVPVLSEAEFLELIGE.

NAD(+)-binding positions include 36 to 40, 85 to 86, and E117; these read DAAYD and SL. K119 (N6-AMP-lysine intermediate) is an active-site residue. The NAD(+) site is built by R140, E177, K294, and K318. Residues C412, C415, C430, and C436 each coordinate Zn(2+). The BRCT domain occupies 597 to 675; that stretch reads AEDLPLSGNT…EAEFLELIGE (79 aa).

Belongs to the NAD-dependent DNA ligase family. LigA subfamily. Mg(2+) serves as cofactor. Mn(2+) is required as a cofactor.

It carries out the reaction NAD(+) + (deoxyribonucleotide)n-3'-hydroxyl + 5'-phospho-(deoxyribonucleotide)m = (deoxyribonucleotide)n+m + AMP + beta-nicotinamide D-nucleotide.. In terms of biological role, DNA ligase that catalyzes the formation of phosphodiester linkages between 5'-phosphoryl and 3'-hydroxyl groups in double-stranded DNA using NAD as a coenzyme and as the energy source for the reaction. It is essential for DNA replication and repair of damaged DNA. This Thioalkalivibrio sulfidiphilus (strain HL-EbGR7) protein is DNA ligase.